Reading from the N-terminus, the 392-residue chain is Phosphoglycerate kinase (392 aa).

Substrate is bound by residues 21–23 (DFN), R36, 59–62 (HLGR), R118, and R151. Residues K202, E321, and 347–350 (GGDS) contribute to the ATP site.

The protein belongs to the phosphoglycerate kinase family. Monomer.

The protein resides in the cytoplasm. The catalysed reaction is (2R)-3-phosphoglycerate + ATP = (2R)-3-phospho-glyceroyl phosphate + ADP. Its pathway is carbohydrate degradation; glycolysis; pyruvate from D-glyceraldehyde 3-phosphate: step 2/5. This chain is Phosphoglycerate kinase, found in Symbiobacterium thermophilum (strain DSM 24528 / JCM 14929 / IAM 14863 / T).